A 74-amino-acid chain; its full sequence is Sec-independent protein translocase protein TatA (74 aa).

Residues 1–21 (MGSFSIWHWLIVLLIVVLVFG) form a helical membrane-spanning segment.

Belongs to the TatA/E family. In terms of assembly, the Tat system comprises two distinct complexes: a TatABC complex, containing multiple copies of TatA, TatB and TatC subunits, and a separate TatA complex, containing only TatA subunits. Substrates initially bind to the TatABC complex, which probably triggers association of the separate TatA complex to form the active translocon.

It localises to the cell inner membrane. Part of the twin-arginine translocation (Tat) system that transports large folded proteins containing a characteristic twin-arginine motif in their signal peptide across membranes. TatA could form the protein-conducting channel of the Tat system. In Nitrosospira multiformis (strain ATCC 25196 / NCIMB 11849 / C 71), this protein is Sec-independent protein translocase protein TatA.